A 234-amino-acid chain; its full sequence is uncharacterized protein (234 aa).

Residues 1 to 23 (MVDQIRSPSWKSGFPSHQHQQGS) form a disordered region.

This is an uncharacterized protein from Caenorhabditis elegans.